A 666-amino-acid polypeptide reads, in one-letter code: UvrABC system protein B (666 aa).

A Helicase ATP-binding domain is found at 26 to 414 (DSFQKGEKKV…KVVEQIIRPT (389 aa)). 39–46 (GVTGSGKT) contributes to the ATP binding site. The short motif at 92–115 (YYDYYQPEAYVPSSDTFIEKDSSI) is the Beta-hairpin element. Positions 429–591 (QIEDLLVEIR…ITPLTIKKEV (163 aa)) constitute a Helicase C-terminal domain. In terms of domain architecture, UVR spans 625 to 660 (EVLKEKLREEMMKAAKELDFERAAILRDKMLSIQTE).

Belongs to the UvrB family. Forms a heterotetramer with UvrA during the search for lesions. Interacts with UvrC in an incision complex.

It is found in the cytoplasm. Its function is as follows. The UvrABC repair system catalyzes the recognition and processing of DNA lesions. A damage recognition complex composed of 2 UvrA and 2 UvrB subunits scans DNA for abnormalities. Upon binding of the UvrA(2)B(2) complex to a putative damaged site, the DNA wraps around one UvrB monomer. DNA wrap is dependent on ATP binding by UvrB and probably causes local melting of the DNA helix, facilitating insertion of UvrB beta-hairpin between the DNA strands. Then UvrB probes one DNA strand for the presence of a lesion. If a lesion is found the UvrA subunits dissociate and the UvrB-DNA preincision complex is formed. This complex is subsequently bound by UvrC and the second UvrB is released. If no lesion is found, the DNA wraps around the other UvrB subunit that will check the other stand for damage. The polypeptide is UvrABC system protein B (Leptospira interrogans serogroup Icterohaemorrhagiae serovar copenhageni (strain Fiocruz L1-130)).